Here is a 203-residue protein sequence, read N- to C-terminus: Outer-membrane lipoprotein carrier protein (203 aa).

Residues 1-20 form the signal peptide; that stretch reads MRRGRVWLAALCLAAGAAHA.

Belongs to the LolA family. As to quaternary structure, monomer.

The protein resides in the periplasm. Participates in the translocation of lipoproteins from the inner membrane to the outer membrane. Only forms a complex with a lipoprotein if the residue after the N-terminal Cys is not an aspartate (The Asp acts as a targeting signal to indicate that the lipoprotein should stay in the inner membrane). The protein is Outer-membrane lipoprotein carrier protein of Methylibium petroleiphilum (strain ATCC BAA-1232 / LMG 22953 / PM1).